Consider the following 333-residue polypeptide: MDQSRMTLGRFLAQQCPQDEKGKALALLLRQVGDSCRRIADAVAGGALREMTGAADNVNVQGEEQKKLDVFANDVLIEGCNWGGTVAGMASEEEDDIYTLPEGEPRGPWLLLFDPLDGSSNIDVNVSVGTIFSVLPAPDTGRDPVNEDLLQPGHRQVAAGYAVYGPSTVLVLTLGDGVYAFTLDRGQGEWFLTSSKMKVPEQTAEFAINCSYQRIWPAPIKRYIEECLDGEEGPRGKRFNMRWIASMVADLHRIFTRGGVFLYPADEKRPNGRLRVLYEINPMSMLMEQAGGEAFTGKERALDLQPEALHQRSGLMLGSREEVEVLRRYYAEQ.

Mg(2+) contacts are provided by glutamate 92, aspartate 114, leucine 116, and aspartate 117. Substrate-binding positions include 117-120 (DGSS) and asparagine 209. Glutamate 279 lines the Mg(2+) pocket.

The protein belongs to the FBPase class 1 family. As to quaternary structure, homotetramer. The cofactor is Mg(2+).

It localises to the cytoplasm. The catalysed reaction is beta-D-fructose 1,6-bisphosphate + H2O = beta-D-fructose 6-phosphate + phosphate. It participates in carbohydrate biosynthesis; gluconeogenesis. The polypeptide is Fructose-1,6-bisphosphatase class 1 (Alkalilimnicola ehrlichii (strain ATCC BAA-1101 / DSM 17681 / MLHE-1)).